The primary structure comprises 192 residues: ADP-ribosylation factor-like protein 14 (192 aa).

Residue Gly-2 is the site of N-myristoyl glycine attachment. GTP is bound by residues 20–27 (GLDSAGKS), 64–68 (DVGGQ), and 124–127 (NKQD).

Belongs to the small GTPase superfamily. Arf family. In terms of assembly, interacts with ARL14EP.

The protein resides in the cytoplasmic vesicle. Functionally, GTPase that recruits MYO1E to MHC class II-containing vesicles via the effector protein ARL14EP and hence controls the movement of these vesicles along the actin cytoskeleton in dendritic cells. The sequence is that of ADP-ribosylation factor-like protein 14 (Arl14) from Mus musculus (Mouse).